The following is a 604-amino-acid chain: Sulfite reductase [NADPH] flavoprotein alpha-component (604 aa).

The 139-residue stretch at 65–203 (VTILYGSQTG…AAGQWHADVL (139 aa)) folds into the Flavodoxin-like domain. FMN contacts are provided by residues 71–76 (SQTGNG), 118–121 (STHG), and 154–163 (LGDSSYEFFC). The 218-residue stretch at 236 to 453 (QNPYSAEVLV…VEPNKHFRLP (218 aa)) folds into the FAD-binding FR-type domain. FAD-binding positions include T324, L358, 392–395 (RLYS), 410–412 (TVA), and 425–428 (GGAS). Residues 524–525 (SR), 530–534 (KIYVQ), and D566 contribute to the NADP(+) site. An FAD-binding site is contributed by Y604.

Belongs to the NADPH-dependent sulphite reductase flavoprotein subunit CysJ family. The protein in the N-terminal section; belongs to the flavodoxin family. This sequence in the C-terminal section; belongs to the flavoprotein pyridine nucleotide cytochrome reductase family. Alpha(8)-beta(8). The alpha component is a flavoprotein, the beta component is a hemoprotein. FAD serves as cofactor. Requires FMN as cofactor.

The enzyme catalyses hydrogen sulfide + 3 NADP(+) + 3 H2O = sulfite + 3 NADPH + 4 H(+). It participates in sulfur metabolism; hydrogen sulfide biosynthesis; hydrogen sulfide from sulfite (NADPH route): step 1/1. In terms of biological role, component of the sulfite reductase complex that catalyzes the 6-electron reduction of sulfite to sulfide. This is one of several activities required for the biosynthesis of L-cysteine from sulfate. The flavoprotein component catalyzes the electron flow from NADPH -&gt; FAD -&gt; FMN to the hemoprotein component. In Shewanella sp. (strain ANA-3), this protein is Sulfite reductase [NADPH] flavoprotein alpha-component.